We begin with the raw amino-acid sequence, 96 residues long: UPF0235 protein VV1_1522 (96 aa).

The protein belongs to the UPF0235 family.

This is UPF0235 protein VV1_1522 from Vibrio vulnificus (strain CMCP6).